The following is a 653-amino-acid chain: Phospholipid-transporting ATPase VD (653 aa).

Residues 1–375 (MACNLCYEAE…GHWCYTRLSN (375 aa)) lie on the Cytoplasmic side of the membrane. ATP is bound by residues Glu14, Phe56, Lys80, Arg124, Thr204, Gly205, Asp206, 259 to 266 (GLIITGKT), Arg293, and Lys299. Asp319 serves as a coordination point for Mg(2+). 2 residues coordinate ATP: Asn322 and Asp323. Asp323 is a Mg(2+) binding site. The helical transmembrane segment at 376–396 (MILYFFYKNVAYVNLLFWYQF) threads the bilayer. At 397 to 407 (FCGFSGTSMTD) the chain is on the exoplasmic loop side. Residues 408 to 428 (YWVLIFFNLLFTSAPPVIYGV) form a helical membrane-spanning segment. The Cytoplasmic segment spans residues 429–458 (LEKDVSAETLMQLPELYKSGQKSEAYLPHT). The helical transmembrane segment at 459-480 (FWITLLDAFYQSLVCFFVPYFT) threads the bilayer. Over 481 to 487 (YQGSDID) the chain is Exoplasmic loop. Residues 488–510 (IFAFGNPLNTAALFIILLHLIIE) traverse the membrane as a helical segment. The Cytoplasmic segment spans residues 511–516 (SKSLTW). A helical transmembrane segment spans residues 517–537 (IHMLVITGSILSYFLFAIVFG). The Exoplasmic loop segment spans residues 538 to 555 (AMCVTCNPPSNPYWIMQE). The chain crosses the membrane as a helical span at residues 556-580 (HVLDPVFYLVCILTTCIALLPRFVY). The Cytoplasmic portion of the chain corresponds to 581 to 653 (RGAGKMNQVT…AFEMARPCKD (73 aa)).

This sequence belongs to the cation transport ATPase (P-type) (TC 3.A.3) family. Type IV subfamily. As to quaternary structure, component of a P4-ATPase flippase complex which consists of a catalytic alpha subunit ATP10A and an accessory beta subunit TMEM30A. Mg(2+) is required as a cofactor. Autophosphorylated at the conserved aspartate of the P-type ATPase signature sequence.

The protein localises to the cell membrane. It localises to the endoplasmic reticulum membrane. The catalysed reaction is ATP + H2O + phospholipidSide 1 = ADP + phosphate + phospholipidSide 2.. It carries out the reaction a beta-D-glucosyl-(1&lt;-&gt;1')-N-acylsphing-4-enine(out) + ATP + H2O = a beta-D-glucosyl-(1&lt;-&gt;1')-N-acylsphing-4-enine(in) + ADP + phosphate + H(+). Catalytic component of a P4-ATPase flippase complex, which catalyzes the hydrolysis of ATP coupled to the transport of glucosylceramide (GlcCer) from the outer to the inner leaflet of the plasma membrane. The polypeptide is Phospholipid-transporting ATPase VD (ATP10D) (Macaca fascicularis (Crab-eating macaque)).